Reading from the N-terminus, the 378-residue chain is UDP-N-acetylglucosamine--N-acetylmuramyl-(pentapeptide) pyrophosphoryl-undecaprenol N-acetylglucosamine transferase (378 aa).

UDP-N-acetyl-alpha-D-glucosamine is bound by residues 14-16 (TGG), Asn125, Arg165, Ser193, and Gln293.

It belongs to the glycosyltransferase 28 family. MurG subfamily.

The protein localises to the cell inner membrane. It catalyses the reaction di-trans,octa-cis-undecaprenyl diphospho-N-acetyl-alpha-D-muramoyl-L-alanyl-D-glutamyl-meso-2,6-diaminopimeloyl-D-alanyl-D-alanine + UDP-N-acetyl-alpha-D-glucosamine = di-trans,octa-cis-undecaprenyl diphospho-[N-acetyl-alpha-D-glucosaminyl-(1-&gt;4)]-N-acetyl-alpha-D-muramoyl-L-alanyl-D-glutamyl-meso-2,6-diaminopimeloyl-D-alanyl-D-alanine + UDP + H(+). The protein operates within cell wall biogenesis; peptidoglycan biosynthesis. Its function is as follows. Cell wall formation. Catalyzes the transfer of a GlcNAc subunit on undecaprenyl-pyrophosphoryl-MurNAc-pentapeptide (lipid intermediate I) to form undecaprenyl-pyrophosphoryl-MurNAc-(pentapeptide)GlcNAc (lipid intermediate II). The polypeptide is UDP-N-acetylglucosamine--N-acetylmuramyl-(pentapeptide) pyrophosphoryl-undecaprenol N-acetylglucosamine transferase (Bartonella quintana (strain Toulouse) (Rochalimaea quintana)).